The chain runs to 242 residues: Phosphatidylethanolamine-binding protein 4 (242 aa).

A signal peptide spans 1-26 (MTMKLVAAALCLSLLAAGLWVGLSLT). Residues 31-50 (EEGKPGGEKPGGGKPGGSGR) form a disordered region. Over residues 38-50 (EKPGGGKPGGSGR) the composition is skewed to gly residues. 2 N-linked (GlcNAc...) asparagine glycosylation sites follow: Asn77 and Asn139. Positions 210–242 (DPDTSTQFMTQFDEELSSEFGRINDDQEQFNQK) are important for secretion.

Belongs to the phosphatidylethanolamine-binding protein family.

It is found in the secreted. Promotes AKT phosphorylation, suggesting a possible role in the PI3K-AKT signaling pathway. The chain is Phosphatidylethanolamine-binding protein 4 (Pebp4) from Mus musculus (Mouse).